A 538-amino-acid polypeptide reads, in one-letter code: L-aspartate oxidase (538 aa).

FAD is bound by residues 14–17 (SGAA), Lys-36, 43–50 (STYWAQGG), and Asp-223. The Proton donor/acceptor role is filled by Arg-290. FAD-binding positions include Glu-375 and 391 to 392 (SL).

The protein belongs to the FAD-dependent oxidoreductase 2 family. NadB subfamily. It depends on FAD as a cofactor.

The protein localises to the cytoplasm. The enzyme catalyses L-aspartate + O2 = iminosuccinate + H2O2. It participates in cofactor biosynthesis; NAD(+) biosynthesis; iminoaspartate from L-aspartate (oxidase route): step 1/1. In terms of biological role, catalyzes the oxidation of L-aspartate to iminoaspartate, the first step in the de novo biosynthesis of NAD(+). This Pseudomonas aeruginosa (strain ATCC 15692 / DSM 22644 / CIP 104116 / JCM 14847 / LMG 12228 / 1C / PRS 101 / PAO1) protein is L-aspartate oxidase (nadB).